Here is a 477-residue protein sequence, read N- to C-terminus: Protein translocase subunit SecY (477 aa).

A run of 10 helical transmembrane segments spans residues 28 to 48, 67 to 89, 130 to 150, 165 to 185, 196 to 216, 234 to 254, 286 to 306, 329 to 349, 387 to 407, and 413 to 433; these read FMIS…LAII, FFSL…AVGI, IITL…ATNS, DFVA…VFLG, GITL…FIAA, AISF…TTFI, SAGV…VTIA, GIVL…YIQI, FIGA…SALI, and LSLG…FMSA.

The protein belongs to the SecY/SEC61-alpha family. In terms of assembly, component of the Sec protein translocase complex. Heterotrimer consisting of SecY, SecE and SecG subunits. The heterotrimers can form oligomers, although 1 heterotrimer is thought to be able to translocate proteins. Interacts with the ribosome. Interacts with SecDF, and other proteins may be involved. Interacts with SecA.

The protein localises to the cell membrane. In terms of biological role, the central subunit of the protein translocation channel SecYEG. Consists of two halves formed by TMs 1-5 and 6-10. These two domains form a lateral gate at the front which open onto the bilayer between TMs 2 and 7, and are clamped together by SecE at the back. The channel is closed by both a pore ring composed of hydrophobic SecY resides and a short helix (helix 2A) on the extracellular side of the membrane which forms a plug. The plug probably moves laterally to allow the channel to open. The ring and the pore may move independently. This Mycoplasma pneumoniae (strain ATCC 29342 / M129 / Subtype 1) (Mycoplasmoides pneumoniae) protein is Protein translocase subunit SecY.